A 185-amino-acid polypeptide reads, in one-letter code: Large ribosomal subunit protein uL5 (185 aa).

Belongs to the universal ribosomal protein uL5 family. In terms of assembly, part of the 50S ribosomal subunit; part of the 5S rRNA/L5/L18/L25 subcomplex. Contacts the 5S rRNA and the P site tRNA. Forms a bridge to the 30S subunit in the 70S ribosome.

This is one of the proteins that bind and probably mediate the attachment of the 5S RNA into the large ribosomal subunit, where it forms part of the central protuberance. In the 70S ribosome it contacts protein S13 of the 30S subunit (bridge B1b), connecting the 2 subunits; this bridge is implicated in subunit movement. Contacts the P site tRNA; the 5S rRNA and some of its associated proteins might help stabilize positioning of ribosome-bound tRNAs. In Rhizobium johnstonii (strain DSM 114642 / LMG 32736 / 3841) (Rhizobium leguminosarum bv. viciae), this protein is Large ribosomal subunit protein uL5.